Consider the following 227-residue polypeptide: A-type potassium channel modulatory protein KCNIP1 (227 aa).

An EF-hand 1; degenerate domain is found at 38-94; it reads LEMTMVCHRPEGLEQLEAQTNFTKRELQVLYRGFKNECPSGVVNEETFKQIYAQFFP. EF-hand domains are found at residues 97-132, 133-168, and 181-216; these read DAST…LLRG, TVHE…IYDM, and TPRQ…DDNI. 9 residues coordinate Ca(2+): Asp146, Asn148, Asp150, Tyr152, Glu157, Asp194, Asn196, Asp198, and Glu205. Residues 214 to 227 form an interaction with KCND2 region; it reads DNIMRSLQLFQNVM.

This sequence belongs to the recoverin family. As to quaternary structure, component of heteromultimeric potassium channels. Identified in potassium channel complexes containing KCND1, KCND2, KCND3, KCNIP1, KCNIP2, KCNIP3, KCNIP4, DPP6 and DPP10. Part of a heterooctamer composed of the tetrameric channel and four KCNIP1 chains. Probably part of a complex consisting of KCNIP1, KCNIP2 isoform 3 and KCND2. Self-associates to form homodimers and homotetramers. Interacts with KCNIP2 isoform 3 in a calcium-dependent manner. Interacts with KCND2; this interaction mediates the capture of both the N- and C-terminus of KCND2, thus preventing KCND2 N-type inactivation and modulates the channel gating kinetics. Interacts with KCND3; each KCNIP1 monomer interacts with two adjacent KCND3 subunits, through both the N-terminal inactivation ball of a KCND3 subunit and a C-terminal helix from the adjacent KCND3 subunit, clamping them together; this interaction stabilizes the tetrameric form and modulates the channel gating kinetics namely channel activation and inactivation kinetics and rate of recovery from inactivation. Detected in hippocampus and in the molecular layer of the dentate gyrus (at protein level). Isoform 1 and isoform 2 are predominantly expressed at equal levels in brain. Colocalizes with KCND3 in inhibitory interneurons in cortex and hippocampus and in striatal interneurons.

Its subcellular location is the cell membrane. It localises to the cytoplasm. The protein resides in the cell projection. The protein localises to the dendrite. Its function is as follows. Regulatory subunit of Kv4/D (Shal)-type voltage-gated rapidly inactivating A-type potassium channels. Regulates channel density, inactivation kinetics and rate of recovery from inactivation in a calcium-dependent and isoform-specific manner. Modulates KCND2/Kv4.2 currents. In vitro, modulates KCND1/Kv4.1 currents. Increases the presence of KCND2 at the cell surface. In Rattus norvegicus (Rat), this protein is A-type potassium channel modulatory protein KCNIP1.